A 73-amino-acid polypeptide reads, in one-letter code: Conotoxin im23b (73 aa).

The first 22 residues, M1–G22, serve as a signal peptide directing secretion. Positions D23–A28 are excised as a propeptide. 3 disulfides stabilise this stretch: C34/C41, C45/C55, and C56/C71.

This sequence belongs to the conotoxin K superfamily. As to expression, expressed by the venom duct.

Its subcellular location is the secreted. Its function is as follows. Neurotoxin that induces excitatory symptoms in mice following intracranial administration. No symptoms are observed after intraperitoneal and intravenous (tail vein) injections. The sequence is that of Conotoxin im23b from Conus imperialis (Imperial cone).